The sequence spans 232 residues: 2,3-bisphosphoglycerate-dependent phosphoglycerate mutase (232 aa).

Substrate contacts are provided by residues 10-17 (RHGESIWN), 23-24 (TG), Arg-62, 89-92 (ERHY), Lys-100, 116-117 (RR), and 185-186 (GN). His-11 (tele-phosphohistidine intermediate) is an active-site residue. Residue Glu-89 is the Proton donor/acceptor of the active site.

The protein belongs to the phosphoglycerate mutase family. BPG-dependent PGAM subfamily. In terms of assembly, homodimer.

It carries out the reaction (2R)-2-phosphoglycerate = (2R)-3-phosphoglycerate. The protein operates within carbohydrate degradation; glycolysis; pyruvate from D-glyceraldehyde 3-phosphate: step 3/5. In terms of biological role, catalyzes the interconversion of 2-phosphoglycerate and 3-phosphoglycerate. The chain is 2,3-bisphosphoglycerate-dependent phosphoglycerate mutase from Buchnera aphidicola subsp. Baizongia pistaciae (strain Bp).